The primary structure comprises 147 residues: Ubiquitin-conjugating enzyme E2 2 (147 aa).

The region spanning 1–147 (MALKRIQKEL…AREWTQKYAM (147 aa)) is the UBC core domain. C85 acts as the Glycyl thioester intermediate in catalysis.

This sequence belongs to the ubiquitin-conjugating enzyme family. Interacts with the brc-1-brd-1 heterodimer following ionizing irradiation. Expressed in the nervous system.

It localises to the nucleus. Its subcellular location is the chromosome. The protein localises to the cytoplasm. The enzyme catalyses S-ubiquitinyl-[E1 ubiquitin-activating enzyme]-L-cysteine + [E2 ubiquitin-conjugating enzyme]-L-cysteine = [E1 ubiquitin-activating enzyme]-L-cysteine + S-ubiquitinyl-[E2 ubiquitin-conjugating enzyme]-L-cysteine.. Its pathway is protein modification; protein ubiquitination. Catalyzes the covalent attachment of ubiquitin to other proteins. Mediates the selective degradation of short-lived and abnormal proteins. Plays a role in the DNA damage response. In particular, in response to ionizing radiation, associates with the E3 ubiquitin-protein ligase brc-1-brd-1 heterodimer on chromatin to activate E3-ubiquitin ligase activity of the heterodimer, and thus its DNA damage repair mechanisms. Required, cell autonomously, for death of the linker cell, a male-specific cell which guides the elongation of the gonad; perhaps acting as part of the ubiquitin proteasome system (UPS) and modulated by heat shock transcription factor hsf-1. This Caenorhabditis elegans protein is Ubiquitin-conjugating enzyme E2 2.